The primary structure comprises 303 residues: UDP-3-O-acyl-N-acetylglucosamine deacetylase (303 aa).

Residues H77, H236, and D240 each coordinate Zn(2+). The active-site Proton donor is the H263.

It belongs to the LpxC family. Zn(2+) is required as a cofactor.

The enzyme catalyses a UDP-3-O-[(3R)-3-hydroxyacyl]-N-acetyl-alpha-D-glucosamine + H2O = a UDP-3-O-[(3R)-3-hydroxyacyl]-alpha-D-glucosamine + acetate. It functions in the pathway glycolipid biosynthesis; lipid IV(A) biosynthesis; lipid IV(A) from (3R)-3-hydroxytetradecanoyl-[acyl-carrier-protein] and UDP-N-acetyl-alpha-D-glucosamine: step 2/6. Catalyzes the hydrolysis of UDP-3-O-myristoyl-N-acetylglucosamine to form UDP-3-O-myristoylglucosamine and acetate, the committed step in lipid A biosynthesis. This chain is UDP-3-O-acyl-N-acetylglucosamine deacetylase, found in Ruthia magnifica subsp. Calyptogena magnifica.